Here is a 59-residue protein sequence, read N- to C-terminus: Transcription elongation factor Spt4 (59 aa).

Zn(2+) is bound by residues cysteine 4, cysteine 7, cysteine 16, and cysteine 19.

This sequence belongs to the archaeal Spt4 family. In terms of assembly, heterodimer composed of Spt4 and Spt5.

Its function is as follows. Stimulates transcription elongation. The polypeptide is Transcription elongation factor Spt4 (Methanocaldococcus jannaschii (strain ATCC 43067 / DSM 2661 / JAL-1 / JCM 10045 / NBRC 100440) (Methanococcus jannaschii)).